A 661-amino-acid chain; its full sequence is Transmembrane and coiled-coil domain-containing protein STS1 (661 aa).

2 disordered regions span residues Ala34–Ala71 and Val154–Leu185. The segment covering Ser59–Ala69 has biased composition (low complexity). A compositionally biased stretch (basic and acidic residues) spans Ser175–Gln184. A run of 4 helical transmembrane segments spans residues Ala306–Leu326, Leu333–Ala353, Ser355–Ala375, and Leu466–Ile486.

The protein belongs to the TMCO4 family. In terms of assembly, interacts with PKS10/PKS2 and 4CLL9/ACOS12.

It localises to the endoplasmic reticulum membrane. Involved in anther lipids biosynthesis and is required for tapetum degradation and pollen wall formation. Required for the formation of Ubisch bodies and microspores. Possesses lipase activity in vitro toward two synthetic substrates, p-nitrophenyl acetate (pNPA) and p-nitrophenyl butyrate (pNPB). This Oryza sativa subsp. japonica (Rice) protein is Transmembrane and coiled-coil domain-containing protein STS1.